The following is a 159-amino-acid chain: Mating-type P-specific polypeptide Pi (159 aa).

Residues 103 to 159 (MTTVRGQCSKCTKPHLMRWLLLHYDNPYPSNSEFYDLSAATGLTRTQLRNWFSNRRR) constitute a DNA-binding region (homeobox; TALE-type; partial).

The protein belongs to the TALE/M-ATYP homeobox family.

It is found in the nucleus. In terms of biological role, mating type proteins are sequence specific DNA-binding proteins that act as master switches in yeast differentiation by controlling gene expression in a cell type-specific fashion. Required for meiosis, but plays no role in conjugation. The chain is Mating-type P-specific polypeptide Pi (matPi) from Schizosaccharomyces kambucha (Fission yeast).